A 178-amino-acid chain; its full sequence is Adenine phosphoribosyltransferase (178 aa).

Belongs to the purine/pyrimidine phosphoribosyltransferase family. As to quaternary structure, homodimer.

Its subcellular location is the cytoplasm. The catalysed reaction is AMP + diphosphate = 5-phospho-alpha-D-ribose 1-diphosphate + adenine. It participates in purine metabolism; AMP biosynthesis via salvage pathway; AMP from adenine: step 1/1. Catalyzes a salvage reaction resulting in the formation of AMP, that is energically less costly than de novo synthesis. This Cereibacter sphaeroides (strain KD131 / KCTC 12085) (Rhodobacter sphaeroides) protein is Adenine phosphoribosyltransferase.